We begin with the raw amino-acid sequence, 342 residues long: Foldase protein PrsA (342 aa).

An N-terminal signal peptide occupies residues 1-22 (MVSVKKIVASALVGVLMFSAVG). A lipid anchor (N-palmitoyl cysteine) is attached at C23. The S-diacylglycerol cysteine moiety is linked to residue C23. Residues 189 to 284 (DSGVLTKHLL…FGYHIIQAGA (96 aa)) form the PpiC domain.

The protein belongs to the PrsA family.

It is found in the cell membrane. The enzyme catalyses [protein]-peptidylproline (omega=180) = [protein]-peptidylproline (omega=0). Functionally, plays a major role in protein secretion by helping the post-translocational extracellular folding of several secreted proteins. This is Foldase protein PrsA from Clostridium perfringens (strain 13 / Type A).